A 209-amino-acid chain; its full sequence is Pyridoxine/pyridoxamine 5'-phosphate oxidase (209 aa).

Residues 57-62 (RMVLLK), 72-73 (YT), Lys-79, and Gln-101 each bind FMN. Position 62 (Lys-62) interacts with substrate. 3 residues coordinate substrate: Tyr-119, Arg-123, and Ser-127. Residues 136-137 (QS) and Trp-181 contribute to the FMN site. 187–189 (RLH) contributes to the substrate binding site. Arg-191 is a binding site for FMN.

This sequence belongs to the pyridoxamine 5'-phosphate oxidase family. In terms of assembly, homodimer. Requires FMN as cofactor.

The enzyme catalyses pyridoxamine 5'-phosphate + O2 + H2O = pyridoxal 5'-phosphate + H2O2 + NH4(+). The catalysed reaction is pyridoxine 5'-phosphate + O2 = pyridoxal 5'-phosphate + H2O2. The protein operates within cofactor metabolism; pyridoxal 5'-phosphate salvage; pyridoxal 5'-phosphate from pyridoxamine 5'-phosphate: step 1/1. Its pathway is cofactor metabolism; pyridoxal 5'-phosphate salvage; pyridoxal 5'-phosphate from pyridoxine 5'-phosphate: step 1/1. In terms of biological role, catalyzes the oxidation of either pyridoxine 5'-phosphate (PNP) or pyridoxamine 5'-phosphate (PMP) into pyridoxal 5'-phosphate (PLP). This Chelativorans sp. (strain BNC1) protein is Pyridoxine/pyridoxamine 5'-phosphate oxidase.